Here is a 215-residue protein sequence, read N- to C-terminus: Large ribosomal subunit protein uL3 (215 aa).

A disordered region spans residues 124–164 (KRHGFSRGPMTHGSKNHREPGSTGAGTTPGRIYPGKRMAGR).

It belongs to the universal ribosomal protein uL3 family. In terms of assembly, part of the 50S ribosomal subunit. Forms a cluster with proteins L14 and L19.

In terms of biological role, one of the primary rRNA binding proteins, it binds directly near the 3'-end of the 23S rRNA, where it nucleates assembly of the 50S subunit. The protein is Large ribosomal subunit protein uL3 of Synechococcus sp. (strain RCC307).